Here is a 71-residue protein sequence, read N- to C-terminus: uncharacterized protein (71 aa).

This is an uncharacterized protein from Haemophilus influenzae (strain ATCC 51907 / DSM 11121 / KW20 / Rd).